A 359-amino-acid polypeptide reads, in one-letter code: tRNA/tmRNA (uracil-C(5))-methyltransferase (359 aa).

Positions 183, 211, 216, 232, and 292 each coordinate S-adenosyl-L-methionine. Catalysis depends on Cys-317, which acts as the Nucleophile. Catalysis depends on Glu-351, which acts as the Proton acceptor.

It belongs to the class I-like SAM-binding methyltransferase superfamily. RNA M5U methyltransferase family. TrmA subfamily.

It catalyses the reaction uridine(54) in tRNA + S-adenosyl-L-methionine = 5-methyluridine(54) in tRNA + S-adenosyl-L-homocysteine + H(+). It carries out the reaction uridine(341) in tmRNA + S-adenosyl-L-methionine = 5-methyluridine(341) in tmRNA + S-adenosyl-L-homocysteine + H(+). Functionally, dual-specificity methyltransferase that catalyzes the formation of 5-methyluridine at position 54 (m5U54) in all tRNAs, and that of position 341 (m5U341) in tmRNA (transfer-mRNA). The chain is tRNA/tmRNA (uracil-C(5))-methyltransferase from Pseudomonas fluorescens (strain SBW25).